The sequence spans 739 residues: uncharacterized protein (739 aa).

Helical transmembrane passes span 53–73, 90–110, 114–134, 178–198, 421–441, 457–477, 491–511, and 532–552; these read LALGIALWMELGSPQWAALTV, WHLFGMVVGVISGITLVAAIP, LMFILLLAVGIGTFCMIGTFM, TYILLGIVLEASISGLFQLGL, LIWICTAWPSGLTFIMFVCIV, AFLRGACCAVVAAGILNLALM, GLAMMIGGLAFAYPPLTLPAV, and IVYFNTALPLVLGLLYASWMY.

The protein belongs to the aromatic acid exporter ArAE (TC 2.A.85) family.

It localises to the cell membrane. This is an uncharacterized protein from Gluconobacter oxydans (strain 621H) (Gluconobacter suboxydans).